The chain runs to 465 residues: Siroheme synthase (465 aa).

The precorrin-2 dehydrogenase /sirohydrochlorin ferrochelatase stretch occupies residues 1-203 (MDFLPLFHSL…GRPAEAERLL (203 aa)). Residues 22 to 23 (EV) and 43 to 44 (PQ) each bind NAD(+). Ser128 is modified (phosphoserine). Positions 217–465 (GEVYLVGAGP…AWFEGAREDA (249 aa)) are uroporphyrinogen-III C-methyltransferase. Residue Pro226 coordinates S-adenosyl-L-methionine. Asp249 functions as the Proton acceptor in the catalytic mechanism. Catalysis depends on Lys271, which acts as the Proton donor. S-adenosyl-L-methionine is bound by residues 302 to 304 (GGD), Ile307, 332 to 333 (TA), Met384, and Gly413.

The protein in the N-terminal section; belongs to the precorrin-2 dehydrogenase / sirohydrochlorin ferrochelatase family. It in the C-terminal section; belongs to the precorrin methyltransferase family.

The catalysed reaction is uroporphyrinogen III + 2 S-adenosyl-L-methionine = precorrin-2 + 2 S-adenosyl-L-homocysteine + H(+). It carries out the reaction precorrin-2 + NAD(+) = sirohydrochlorin + NADH + 2 H(+). It catalyses the reaction siroheme + 2 H(+) = sirohydrochlorin + Fe(2+). It functions in the pathway cofactor biosynthesis; adenosylcobalamin biosynthesis; precorrin-2 from uroporphyrinogen III: step 1/1. The protein operates within cofactor biosynthesis; adenosylcobalamin biosynthesis; sirohydrochlorin from precorrin-2: step 1/1. It participates in porphyrin-containing compound metabolism; siroheme biosynthesis; precorrin-2 from uroporphyrinogen III: step 1/1. Its pathway is porphyrin-containing compound metabolism; siroheme biosynthesis; siroheme from sirohydrochlorin: step 1/1. It functions in the pathway porphyrin-containing compound metabolism; siroheme biosynthesis; sirohydrochlorin from precorrin-2: step 1/1. Functionally, multifunctional enzyme that catalyzes the SAM-dependent methylations of uroporphyrinogen III at position C-2 and C-7 to form precorrin-2 via precorrin-1. Then it catalyzes the NAD-dependent ring dehydrogenation of precorrin-2 to yield sirohydrochlorin. Finally, it catalyzes the ferrochelation of sirohydrochlorin to yield siroheme. This Pseudomonas aeruginosa (strain LESB58) protein is Siroheme synthase.